A 420-amino-acid polypeptide reads, in one-letter code: Zinc finger and BTB domain-containing protein 42 (420 aa).

The BTB domain occupies 24–92; it reads CDCTVLVGDA…MYEGRLDLHS (69 aa). Disordered regions lie at residues 174 to 204 and 216 to 248; these read PPSW…HPPC and QGAQ…PPVC. A compositionally biased stretch (low complexity) spans 227–241; that stretch reads DSFSEQDSSSPQSAD. 4 consecutive C2H2-type zinc fingers follow at residues 292–314, 332–354, 360–382, and 388–411; these read CICP…LSAH, PTCP…ERTH, YTCV…AVVH, and HACR…RKFH.

It belongs to the krueppel C2H2-type zinc-finger protein family. ZBTB18 subfamily.

The protein resides in the cytoplasm. Its subcellular location is the nucleus. The protein localises to the nucleoplasm. Its function is as follows. Transcriptional repressor. Specifically binds DNA and probably acts by recruiting chromatin remodeling multiprotein complexes. The sequence is that of Zinc finger and BTB domain-containing protein 42 (Zbtb42) from Rattus norvegicus (Rat).